Consider the following 462-residue polypeptide: Semenogelin-1 (462 aa).

The N-terminal stretch at 1-23 (MKPNIIFVLSLLLILEKQAAVMG) is a signal peptide. Gln-24 carries the post-translational modification Pyrrolidone carboxylic acid. Positions 24–61 (QKGGSKGRLPSEFSQFPHGQKGQHYSGQKGKQQTESKG) are disordered. The span at 46–61 (QHYSGQKGKQQTESKG) shows a compositional bias: polar residues. A run of 3 repeats spans residues 70 to 129 (HVDA…VVIH), 141 to 200 (NPSQ…QTEE), and 201 to 260 (LVAN…QDEL). The repeat-rich region stretch occupies residues 70 to 439 (HVDANDHDQS…SHGGLDIVII (370 aa)). Disordered stretches follow at residues 131–157 (KGGKAHRGTQNPSQDQGNSPSGKGISS) and 173–194 (KEQTSVSGAQKGRKQGGSQSSY). Residues 138–157 (GTQNPSQDQGNSPSGKGISS) show a composition bias toward polar residues. Residues 164-283 (ERLWVHGLSK…NQDQQHGRKA (120 aa)) form an interaction with EPPIN region. Positions 261–380 (LVYNKNQHQT…QRSIYSQTEK (120 aa)) are 2 X 60 AA tandem repeats, type 1. The tract at residues 270-432 (TKNLNQDQQH…KGRHQHGSHG (163 aa)) is disordered. 3 stretches are compositionally biased toward polar residues: residues 308–317 (DVSQSSIYSQ), 324–335 (GKSQKQITIPSQ), and 343–352 (ANKISYQSSS). The 3-2 repeat unit spans residues 381-439 (LVAGKSQIQAPNPKQEPWHGENAKGESGQSTNREQDLLSHEQKGRHQHGSHGGLDIVII). The span at 413-424 (REQDLLSHEQKG) shows a compositional bias: basic and acidic residues.

This sequence belongs to the semenogelin family. In terms of assembly, occurs in disulfide-linked complexes which may also contain two less abundant 71- and 76-kDa semenogelin-related polypeptides. Interacts with EPPIN (via C-terminus); Cys-239 is a critical amino acid for both binding to EPPIN. Post-translationally, transglutaminase substrate. In terms of processing, rapidly cleaved after ejaculation by KLK3/PSA, resulting in liquefaction of the semen coagulum and the progressive release of motile spermatozoa. In terms of tissue distribution, seminal vesicle.

The protein localises to the secreted. In terms of biological role, predominant protein in semen. It participates in the formation of a gel matrix entrapping the accessory gland secretions and ejaculated spermatozoa. Fragments of semenogelin and/or fragments of the related proteins may contribute to the activation of progressive sperm movements as the gel-forming proteins are fragmented by KLK3/PSA. Alpha-inhibin-92 and alpha-inhibin-31, derived from the proteolytic degradation of semenogelin, inhibit the secretion of pituitary follicle-stimulating hormone. The protein is Semenogelin-1 (SEMG1) of Homo sapiens (Human).